Reading from the N-terminus, the 869-residue chain is Dynamin-3 (869 aa).

The 267-residue stretch at 28 to 294 (LLELPQIAVV…LTNHIRDTLP (267 aa)) folds into the Dynamin-type G domain. The G1 motif stretch occupies residues 38 to 45 (GGQSAGKS). 38 to 46 (GGQSAGKSS) contributes to the GTP binding site. Residues 64–66 (VTR) are G2 motif. Residues 136–139 (DLPG) form a G3 motif region. The tract at residues 205–208 (TKLD) is G4 motif. 205–211 (TKLDLMD) is a GTP binding site. Residue Y231 is modified to Phosphotyrosine. Residues 235–238 (VNRS) are G5 motif. 236–239 (NRSQ) contributes to the GTP binding site. K299 bears the N6-acetyllysine mark. In terms of domain architecture, PH spans 515 to 621 (QGTNLPPSRQ…ACDSQEDVDS (107 aa)). The residue at position 603 (Y603) is a Phosphotyrosine. Position 604 is an N6-acetyllysine (K604). The region spanning 659–750 (VETIRNLVDS…IIGDISTATV (92 aa)) is the GED domain. The disordered stretch occupies residues 747–869 (TATVSTPAPP…IRPLESSLLD (123 aa)). Phosphoserine is present on residues S769 and S773. 2 stretches are compositionally biased toward pro residues: residues 797-822 (PAIPSPGPHSGAPPVPFRPGPLPPFP) and 832-855 (PQVPSRPTRAPPSVPSRRPPPSPT). Phosphoserine is present on S853.

This sequence belongs to the TRAFAC class dynamin-like GTPase superfamily. Dynamin/Fzo/YdjA family.

It localises to the cytoplasm. Its subcellular location is the cytoskeleton. It catalyses the reaction GTP + H2O = GDP + phosphate + H(+). In terms of biological role, microtubule-associated force-producing protein involved in producing microtubule bundles and able to bind and hydrolyze GTP. Most probably involved in vesicular trafficking processes, in particular endocytosis. The chain is Dynamin-3 (DNM3) from Homo sapiens (Human).